Consider the following 356-residue polypeptide: GTPase Obg (356 aa).

Positions 1–159 (MKFLDEAKVY…RWIWLRMKLI (159 aa)) constitute an Obg domain. The region spanning 160–327 (ADAGLVGLPN…VLRALTDVIS (168 aa)) is the OBG-type G domain. Residues 166-173 (GLPNAGKS), 191-195 (FTTLH), 212-215 (DIPG), 279-282 (NKID), and 308-310 (SGV) contribute to the GTP site. Residues serine 173 and threonine 193 each coordinate Mg(2+). Residues 329–356 (APVSTKAKGEPTENETPPPSTGWSPLSN) form a disordered region.

Belongs to the TRAFAC class OBG-HflX-like GTPase superfamily. OBG GTPase family. In terms of assembly, monomer. Mg(2+) serves as cofactor.

It is found in the cytoplasm. In terms of biological role, an essential GTPase which binds GTP, GDP and possibly (p)ppGpp with moderate affinity, with high nucleotide exchange rates and a fairly low GTP hydrolysis rate. Plays a role in control of the cell cycle, stress response, ribosome biogenesis and in those bacteria that undergo differentiation, in morphogenesis control. The sequence is that of GTPase Obg from Afipia carboxidovorans (strain ATCC 49405 / DSM 1227 / KCTC 32145 / OM5) (Oligotropha carboxidovorans).